Here is a 61-residue protein sequence, read N- to C-terminus: Large ribosomal subunit protein bL32 (61 aa).

The interval 1–22 is disordered; the sequence is MAVPKQKSSKSRGRKRRTHQKV. Residues 7–20 are compositionally biased toward basic residues; sequence KSSKSRGRKRRTHQ.

The protein belongs to the bacterial ribosomal protein bL32 family.

This chain is Large ribosomal subunit protein bL32, found in Desulforapulum autotrophicum (strain ATCC 43914 / DSM 3382 / VKM B-1955 / HRM2) (Desulfobacterium autotrophicum).